The following is a 316-amino-acid chain: Apolipoprotein E (316 aa).

The N-terminal stretch at 1–18 is a signal peptide; sequence MKVLWVALVVALLAGCQA. 8 consecutive repeat copies span residues 79–100, 101–122, 123–144, 145–166, 167–188, 189–210, 211–232, and 233–254. Positions 79 to 254 are 8 X 22 AA approximate tandem repeats; it reads VLMEETMKEV…RLDKMRQQLE (176 aa). A Methionine sulfoxide modification is found at M142. S146 carries the post-translational modification Phosphoserine. An LDL and other lipoprotein receptors binding region spans residues 157-167; sequence HLRKLRKRLLR. 161–164 serves as a coordination point for heparin; sequence LRKR. The segment at 209-289 is lipid-binding and lipoprotein association; sequence AATLSTQVGQ…SWFEPLVEDM (81 aa). T211 carries an O-linked (GalNAc...) threonine glycan. 228–235 contributes to the heparin binding site; that stretch reads RQKLHGRL. Positions 265–316 are homooligomerization; that stretch reads SQIRLQAEAFQARLRSWFEPLVEDMQRQWAGLVEKVQLALHLSPTSPPSENH. A specificity for association with VLDL region spans residues 277–289; that stretch reads RLRSWFEPLVEDM.

This sequence belongs to the apolipoprotein A1/A4/E family. As to quaternary structure, homotetramer. May interact with ABCA1; functionally associated with ABCA1 in the biogenesis of HDLs. May interact with APP/A4 amyloid-beta peptide; the interaction is extremely stable in vitro but its physiological significance is unclear. May interact with MAPT. May interact with MAP2. In the cerebrospinal fluid, interacts with secreted SORL1. Interacts with PMEL; this allows the loading of PMEL luminal fragment on ILVs to induce fibril nucleation. In terms of processing, APOE exists as multiple glycosylated and sialylated glycoforms within cells and in plasma. The extent of glycosylation and sialylation are tissue and context specific. Glycated in plasma VLDL. Post-translationally, phosphorylated by FAM20C in the extracellular medium.

It localises to the secreted. The protein localises to the extracellular space. The protein resides in the extracellular matrix. It is found in the extracellular vesicle. Its subcellular location is the endosome. It localises to the multivesicular body. Its function is as follows. APOE is an apolipoprotein, a protein associating with lipid particles, that mainly functions in lipoprotein-mediated lipid transport between organs via the plasma and interstitial fluids. APOE is a core component of plasma lipoproteins and is involved in their production, conversion and clearance. Apolipoproteins are amphipathic molecules that interact both with lipids of the lipoprotein particle core and the aqueous environment of the plasma. As such, APOE associates with chylomicrons, chylomicron remnants, very low density lipoproteins (VLDL) and intermediate density lipoproteins (IDL) but shows a preferential binding to high-density lipoproteins (HDL). It also binds a wide range of cellular receptors including the LDL receptor/LDLR and the very low-density lipoprotein receptor/VLDLR that mediate the cellular uptake of the APOE-containing lipoprotein particles. Finally, APOE also has a heparin-binding activity and binds heparan-sulfate proteoglycans on the surface of cells, a property that supports the capture and the receptor-mediated uptake of APOE-containing lipoproteins by cells. This is Apolipoprotein E (APOE) from Ovis aries musimon (Mouflon).